Reading from the N-terminus, the 80-residue chain is Putative membrane protein insertion efficiency factor (80 aa).

The protein belongs to the UPF0161 family.

The protein resides in the cell inner membrane. Its function is as follows. Could be involved in insertion of integral membrane proteins into the membrane. The sequence is that of Putative membrane protein insertion efficiency factor from Picosynechococcus sp. (strain ATCC 27264 / PCC 7002 / PR-6) (Agmenellum quadruplicatum).